Consider the following 360-residue polypeptide: D-alanine--D-alanine ligase (360 aa).

Residues 146-352 (KICAEHAGLH…FSQLIDRLLQ (207 aa)) enclose the ATP-grasp domain. ATP is bound at residue 179 to 234 (LEEFTLPFFVKPASQGSSIGITKVHRPEELAAALEKAFMVDTKVLIEKTIEGREIE). Positions 305, 319, and 321 each coordinate Mg(2+).

This sequence belongs to the D-alanine--D-alanine ligase family. Mg(2+) is required as a cofactor. It depends on Mn(2+) as a cofactor.

It localises to the cytoplasm. It carries out the reaction 2 D-alanine + ATP = D-alanyl-D-alanine + ADP + phosphate + H(+). The protein operates within cell wall biogenesis; peptidoglycan biosynthesis. In terms of biological role, cell wall formation. The protein is D-alanine--D-alanine ligase of Prosthecochloris aestuarii (strain DSM 271 / SK 413).